Consider the following 620-residue polypeptide: 1-deoxy-D-xylulose-5-phosphate synthase (620 aa).

Residues His-80 and 121–123 (GHS) contribute to the thiamine diphosphate site. Asp-152 is a binding site for Mg(2+). Residues 153-154 (GA), Asn-181, Tyr-288, and Glu-370 each bind thiamine diphosphate. Mg(2+) is bound at residue Asn-181.

Belongs to the transketolase family. DXPS subfamily. Homodimer. Mg(2+) is required as a cofactor. Thiamine diphosphate serves as cofactor.

The enzyme catalyses D-glyceraldehyde 3-phosphate + pyruvate + H(+) = 1-deoxy-D-xylulose 5-phosphate + CO2. It functions in the pathway metabolic intermediate biosynthesis; 1-deoxy-D-xylulose 5-phosphate biosynthesis; 1-deoxy-D-xylulose 5-phosphate from D-glyceraldehyde 3-phosphate and pyruvate: step 1/1. In terms of biological role, catalyzes the acyloin condensation reaction between C atoms 2 and 3 of pyruvate and glyceraldehyde 3-phosphate to yield 1-deoxy-D-xylulose-5-phosphate (DXP). The protein is 1-deoxy-D-xylulose-5-phosphate synthase of Escherichia coli O6:K15:H31 (strain 536 / UPEC).